The primary structure comprises 477 residues: Ribulose bisphosphate carboxylase large chain (477 aa).

Positions 1–2 (MS) are excised as a propeptide. P3 bears the N-acetylproline mark. K14 carries the N6,N6,N6-trimethyllysine modification. Positions 123 and 173 each coordinate substrate. K175 functions as the Proton acceptor in the catalytic mechanism. K177 is a binding site for substrate. Mg(2+) contacts are provided by K201, D203, and E204. The residue at position 201 (K201) is an N6-carboxylysine. H294 acts as the Proton acceptor in catalysis. Substrate is bound by residues R295, H327, and S379.

The protein belongs to the RuBisCO large chain family. Type I subfamily. In terms of assembly, heterohexadecamer of 8 large chains and 8 small chains; disulfide-linked. The disulfide link is formed within the large subunit homodimers. Requires Mg(2+) as cofactor. Post-translationally, the disulfide bond which can form in the large chain dimeric partners within the hexadecamer appears to be associated with oxidative stress and protein turnover.

Its subcellular location is the plastid. The enzyme catalyses 2 (2R)-3-phosphoglycerate + 2 H(+) = D-ribulose 1,5-bisphosphate + CO2 + H2O. The catalysed reaction is D-ribulose 1,5-bisphosphate + O2 = 2-phosphoglycolate + (2R)-3-phosphoglycerate + 2 H(+). Functionally, ruBisCO catalyzes two reactions: the carboxylation of D-ribulose 1,5-bisphosphate, the primary event in carbon dioxide fixation, as well as the oxidative fragmentation of the pentose substrate in the photorespiration process. Both reactions occur simultaneously and in competition at the same active site. The polypeptide is Ribulose bisphosphate carboxylase large chain (rbcL) (Lathraea clandestina (Purple toothwort)).